Reading from the N-terminus, the 196-residue chain is DnaA initiator-associating protein DiaA (196 aa).

One can recognise an SIS domain in the interval 34–196 (VVQSLLNGNK…DNTLFPHQEV (163 aa)).

This sequence belongs to the SIS family. DiaA subfamily. As to quaternary structure, homotetramer; dimer of dimers.

In terms of biological role, required for the timely initiation of chromosomal replication via direct interactions with the DnaA initiator protein. In Erwinia tasmaniensis (strain DSM 17950 / CFBP 7177 / CIP 109463 / NCPPB 4357 / Et1/99), this protein is DnaA initiator-associating protein DiaA.